We begin with the raw amino-acid sequence, 131 residues long: Fumarate reductase subunit C (131 aa).

Transmembrane regions (helical) follow at residues 30-50 (EGTA…LFAL), 63-83 (FLQN…ALLH), and 109-129 (IIKS…FVAL).

Belongs to the FrdC family. Part of an enzyme complex containing four subunits: a flavoprotein (FrdA), an iron-sulfur protein (FrdB), and two hydrophobic anchor proteins (FrdC and FrdD).

It localises to the cell inner membrane. Its function is as follows. Two distinct, membrane-bound, FAD-containing enzymes are responsible for the catalysis of fumarate and succinate interconversion; fumarate reductase is used in anaerobic growth, and succinate dehydrogenase is used in aerobic growth. Anchors the catalytic components of the fumarate reductase complex to the cell inner membrane, binds quinones. This chain is Fumarate reductase subunit C, found in Shigella boydii serotype 18 (strain CDC 3083-94 / BS512).